The following is a 200-amino-acid chain: Large ribosomal subunit protein uL4 (200 aa).

The segment at 43–67 (RAQKTRAEVSGSGKKPWRQKGTGRA) is disordered.

Belongs to the universal ribosomal protein uL4 family. Part of the 50S ribosomal subunit.

Its function is as follows. One of the primary rRNA binding proteins, this protein initially binds near the 5'-end of the 23S rRNA. It is important during the early stages of 50S assembly. It makes multiple contacts with different domains of the 23S rRNA in the assembled 50S subunit and ribosome. Forms part of the polypeptide exit tunnel. The protein is Large ribosomal subunit protein uL4 of Haemophilus influenzae (strain PittEE).